Reading from the N-terminus, the 127-residue chain is Holo-[acyl-carrier-protein] synthase (127 aa).

2 residues coordinate Mg(2+): Asp7 and Glu53.

Belongs to the P-Pant transferase superfamily. AcpS family. Mg(2+) is required as a cofactor.

Its subcellular location is the cytoplasm. It carries out the reaction apo-[ACP] + CoA = holo-[ACP] + adenosine 3',5'-bisphosphate + H(+). Functionally, transfers the 4'-phosphopantetheine moiety from coenzyme A to a Ser of acyl-carrier-protein. This is Holo-[acyl-carrier-protein] synthase from Herpetosiphon aurantiacus (strain ATCC 23779 / DSM 785 / 114-95).